Here is a 147-residue protein sequence, read N- to C-terminus: Transthyretin (147 aa).

The first 20 residues, 1-20 (MASHRLLLLCLAGLVFVSEA), serve as a signal peptide directing secretion. Cysteine 30 carries the post-translational modification Sulfocysteine. Lysine 35 contacts L-thyroxine. Position 62 is a 4-carboxyglutamate; in a patient with Moyamoya disease (glutamate 62). A Phosphoserine modification is found at serine 72. Glutamate 74 lines the L-thyroxine pocket. A glycan (N-linked (GlcNAc...) asparagine) is linked at asparagine 118. Serine 137 is an L-thyroxine binding site.

The protein belongs to the transthyretin family. As to quaternary structure, homotetramer. Dimer of dimers. In the homotetramer, subunits assemble around a central channel that can accommodate two ligand molecules. Interacts with RBP4. Not glycosylated under normal conditions. Following unfolding, caused for example by variant AMYLD1 'Gly-38', the cryptic Asn-118 site is exposed and glycosylated by STT3B-containing OST complex, leading to its degradation by the ER-associated degradation (ERAD) pathway. In terms of processing, sulfonation of the reactive cysteine Cys-30 enhances the stability of the native conformation of TTR, avoiding misassembly of the protein leading to amyloid formation. Detected in serum and cerebrospinal fluid (at protein level). Highly expressed in choroid plexus epithelial cells. Detected in retina pigment epithelium and liver.

It localises to the secreted. Its subcellular location is the cytoplasm. Its function is as follows. Thyroid hormone-binding protein. Probably transports thyroxine from the bloodstream to the brain. In Homo sapiens (Human), this protein is Transthyretin (TTR).